The sequence spans 412 residues: uncharacterized protein (412 aa).

A Zn(2+)-binding site is contributed by His49. Glu52 functions as the Proton acceptor in the catalytic mechanism. Residues His53 and Glu129 each contribute to the Zn(2+) site.

The protein belongs to the peptidase M16 family. Zn(2+) is required as a cofactor.

This is an uncharacterized protein from Rickettsia felis (strain ATCC VR-1525 / URRWXCal2) (Rickettsia azadi).